Reading from the N-terminus, the 433-residue chain is Chaperone SurA (433 aa).

An N-terminal signal peptide occupies residues 1-20 (MKNWRTLIFGLMFSVSTAFA). PpiC domains lie at 171–272 (DTEL…KVND) and 282–382 (VTEV…QLLD).

Its subcellular location is the periplasm. The catalysed reaction is [protein]-peptidylproline (omega=180) = [protein]-peptidylproline (omega=0). Functionally, chaperone involved in the correct folding and assembly of outer membrane proteins. Recognizes specific patterns of aromatic residues and the orientation of their side chains, which are found more frequently in integral outer membrane proteins. May act in both early periplasmic and late outer membrane-associated steps of protein maturation. This is Chaperone SurA from Photorhabdus laumondii subsp. laumondii (strain DSM 15139 / CIP 105565 / TT01) (Photorhabdus luminescens subsp. laumondii).